Here is a 129-residue protein sequence, read N- to C-terminus: Basic blue protein (129 aa).

A signal peptide spans 1-33 (MAKGRGSASWSARAIVTLMAVSVLLLQADYVQA). Positions 34–129 (ATYTVGDSGI…SDMKIAVTAV (96 aa)) constitute a Phytocyanin domain. Cu cation is bound by residues His-72, Cys-112, His-117, and Met-122. Cysteines 85 and 118 form a disulfide.

In terms of tissue distribution, expressed in the inflorescence and in the transmitting tract of the pistil. Detected in roots, stems, cauline leaves, cotyledons, hypocotyls, guard cells, pistils, sepals, stamen filaments and vascular bundles of roots but not of leaves. Not expressed in petals, anthers or pollen.

It is found in the secreted. The protein localises to the extracellular space. The protein resides in the extracellular matrix. Its function is as follows. Forms a concentration gradient along the pollen tube growth path, with a lower level in the stigma papilla cell wall and a higher level in the transmitting tract extracellular matix of the style. The protein is Basic blue protein (ARPN) of Arabidopsis thaliana (Mouse-ear cress).